We begin with the raw amino-acid sequence, 374 residues long: Layilin (374 aa).

The signal sequence occupies residues 1–24 (MQPGPALQAVLLAVLLSEPRSSKG). Residues 25–221 (RLLSGQLVCR…TKETFKESRE (197 aa)) are Extracellular-facing. One can recognise a C-type lectin domain in the interval 37-177 (TRRPCYKVIY…CNMKNNFICK (141 aa)). Disulfide bonds link C63–C176 and C142–C168. N109 carries N-linked (GlcNAc...) asparagine glycosylation. The disordered stretch occupies residues 184–212 (STTPSIRPGGEATEPPTPVLPEETQKEDT). A helical transmembrane segment spans residues 222–242 (AALNLAYILIPSIPLFLLLVV). Over 243–374 (TSAACWVWIC…SGWVENEIYY (132 aa)) the chain is Cytoplasmic. S279 and S292 each carry phosphoserine. The segment at 323–367 (DYDNMAVNPSESGFVTLASMESGFVTNDIYEFSPDRMGRSKESGW) is interaction with NF2. Residues 330 to 374 (NPSESGFVTLASMESGFVTNDIYEFSPDRMGRSKESGWVENEIYY) form an interaction with TLN1 region. Repeat copies occupy residues 333–337 (ESGFV), 343–347 (ESGFV), 349–352 (NDIY), 364–368 (ESGWV), and 370–373 (NEIY). Residues 333–368 (ESGFVTLASMESGFVTNDIYEFSPDRMGRSKESGWV) form a 3 X 5 AA repeats of E-S-G-X-V region. Positions 349–373 (NDIYEFSPDRMGRSKESGWVENEIY) are 2 X 4 AA repeats of N-X-I-Y.

As to quaternary structure, interacts with NF2 and RDX. Interacts with TLN1. Widely expressed. Abundant in the ovary.

Its subcellular location is the membrane. Receptor for hyaluronate. The sequence is that of Layilin (LAYN) from Cricetulus griseus (Chinese hamster).